Consider the following 140-residue polypeptide: Granulocyte-macrophage colony-stimulating factor (140 aa).

The signal sequence occupies residues 1-17; that stretch reads MWLQNLLLLGTVVCSIC. The O-linked (GalNAc...) serine glycan is linked to Ser-24. The O-linked (GalNAc...) threonine glycan is linked to Thr-27. 3 N-linked (GlcNAc...) asparagine glycosylation sites follow: Asn-45, Asn-55, and Asn-87. 2 disulfide bridges follow: Cys-72/Cys-114 and Cys-106/Cys-139.

The protein belongs to the GM-CSF family. As to quaternary structure, monomer. The signaling GM-CSF receptor complex is a dodecamer of two head-to-head hexamers of two alpha, two beta, and two ligand subunits.

The protein resides in the secreted. Its function is as follows. Cytokine that stimulates the growth and differentiation of hematopoietic precursor cells from various lineages, including granulocytes, macrophages, eosinophils and erythrocytes. In Cavia porcellus (Guinea pig), this protein is Granulocyte-macrophage colony-stimulating factor (CSF2).